Here is a 908-residue protein sequence, read N- to C-terminus: Glutamate receptor ionotropic, kainate 2 (908 aa).

Residues 1-31 (MKIIFPILSNPVFRRTVKLLLCLLWIGYSQG) form the signal peptide. The Extracellular segment spans residues 32-561 (TTHVLRFGGI…VFSFLNPLSP (530 aa)). N-linked (GlcNAc...) asparagine glycosylation is found at N67, N73, N275, N378, N412, N423, and N430. Cysteines 96 and 347 form a disulfide. The L-glutamate site is built by P516, A518, and R523. N-linked (GlcNAc...) asparagine glycosylation is present at N546. Residues 562-582 (DIWMYVLLACLGVSCVLFVIA) traverse the membrane as a helical segment. At 583–638 (RFSPYEWYNPHPCNPDSDVVENNFTLLNSFWFGVGALMRQGSELMPKALSTRIVGG) the chain is on the cytoplasmic side. The chain crosses the membrane as a helical span at residues 639-659 (IWWFFTLIIISSYTANLAAFL). The Extracellular segment spans residues 660-819 (TVERMESPID…KEASALGVQN (160 aa)). L-glutamate is bound by residues A689, T690, and E738. Cysteines 750 and 804 form a disulfide. N751 carries an N-linked (GlcNAc...) asparagine glycan. A helical transmembrane segment spans residues 820 to 840 (IGGIFIVLAAGLVLSVFVAVG). Residues 841 to 908 (EFLYKSKKNA…RRLPGKETMA (68 aa)) are Cytoplasmic-facing. 2 positions are modified to phosphoserine; by PKC: S846 and S868. Residue K886 forms a Glycyl lysine isopeptide (Lys-Gly) (interchain with G-Cter in SUMO1) linkage.

It belongs to the glutamate-gated ion channel (TC 1.A.10.1) family. GRIK2 subfamily. As to quaternary structure, homotetramer and heterotetramer with GRIK5. Tetramers may be formed by the dimerization of dimers. Assembles into a kainate-gated homomeric channel that does not bind AMPA. Can form functional heteromeric receptors with GRIK3, GRIK4 and GRIK5. Interacts with NETO2. Interacts with DLG4. Interacts with NETO2. Interacts (via C-terminus) with KLHL17 (via kelch repeats); the interaction targets GRIK2 for degradation via ubiquitin-proteasome pathway. In terms of processing, sumoylation mediates kainate receptor-mediated endocytosis and regulates synaptic transmission. Sumoylation is enhanced by PIAS3 and desumoylated by SENP1. Ubiquitinated. Ubiquitination regulates the GRIK2 levels at the synapse by leading kainate receptor degradation through proteasome. Post-translationally, phosphorylated by PKC at Ser-868 upon agonist activation, this directly enhance sumoylation.

The protein resides in the cell membrane. It localises to the postsynaptic cell membrane. It carries out the reaction Ca(2+)(in) = Ca(2+)(out). The enzyme catalyses Na(+)(in) = Na(+)(out). Its activity is regulated as follows. Cold receptor activity activated by temperatures between 10-19 degrees Celsius. Its function is as follows. Ionotropic glutamate receptor that functions as a cation-permeable ligand-gated ion channel, gated by L-glutamate and the glutamatergic agonist kainic acid. L-glutamate acts as an excitatory neurotransmitter at many synapses in the central nervous system. Binding of the excitatory neurotransmitter L-glutamate induces a conformation change, leading to the opening of the cation channel, and thereby converts the chemical signal to an electrical impulse. The receptor then desensitizes rapidly and enters a transient inactive state, characterized by the presence of bound agonist. Modulates cell surface expression of NETO2. In association with GRIK3, involved in presynaptic facilitation of glutamate release at hippocampal mossy fiber synapses. In terms of biological role, independent of its ionotropic glutamate receptor activity, acts as a thermoreceptor conferring sensitivity to cold temperatures. Functions in dorsal root ganglion neurons. The sequence is that of Glutamate receptor ionotropic, kainate 2 (GRIK2) from Macaca fascicularis (Crab-eating macaque).